The sequence spans 835 residues: Protein translocase subunit SecA (835 aa).

Residues Gln85, Gly103–Thr107, and Asp492 contribute to the ATP site. The disordered stretch occupies residues Val788–Val807. Zn(2+) is bound by residues Cys819, Cys821, Cys830, and Cys831.

It belongs to the SecA family. In terms of assembly, monomer and homodimer. Part of the essential Sec protein translocation apparatus which comprises SecA, SecYEG and auxiliary proteins SecDF. Other proteins may also be involved. Requires Zn(2+) as cofactor.

The protein resides in the cell membrane. Its subcellular location is the cytoplasm. It catalyses the reaction ATP + H2O + cellular proteinSide 1 = ADP + phosphate + cellular proteinSide 2.. Functionally, part of the Sec protein translocase complex. Interacts with the SecYEG preprotein conducting channel. Has a central role in coupling the hydrolysis of ATP to the transfer of proteins into and across the cell membrane, serving as an ATP-driven molecular motor driving the stepwise translocation of polypeptide chains across the membrane. The polypeptide is Protein translocase subunit SecA (Bacillus cereus (strain ATCC 14579 / DSM 31 / CCUG 7414 / JCM 2152 / NBRC 15305 / NCIMB 9373 / NCTC 2599 / NRRL B-3711)).